Reading from the N-terminus, the 423-residue chain is D-tagatose-1,6-bisphosphate aldolase subunit GatZ (423 aa).

It belongs to the GatZ/KbaZ family. GatZ subfamily. As to quaternary structure, forms a complex with GatY.

Its pathway is carbohydrate metabolism; D-tagatose 6-phosphate degradation; D-glyceraldehyde 3-phosphate and glycerone phosphate from D-tagatose 6-phosphate: step 2/2. Its function is as follows. Component of the tagatose-1,6-bisphosphate aldolase GatYZ that is required for full activity and stability of the Y subunit. Could have a chaperone-like function for the proper and stable folding of GatY. When expressed alone, GatZ does not show any aldolase activity. Is involved in the catabolism of galactitol. The sequence is that of D-tagatose-1,6-bisphosphate aldolase subunit GatZ from Salmonella heidelberg (strain SL476).